Reading from the N-terminus, the 103-residue chain is Flagellar hook-basal body complex protein FliE (103 aa).

The protein belongs to the FliE family.

It is found in the bacterial flagellum basal body. The chain is Flagellar hook-basal body complex protein FliE from Helicobacter hepaticus (strain ATCC 51449 / 3B1).